A 212-amino-acid polypeptide reads, in one-letter code: Coat protein (212 aa).

The protein belongs to the potexvirus capsid protein family.

The protein resides in the virion. Its function is as follows. Required for genome encapsidation. Forms ribonucleoprotein complexes along with TGB1 helicase and viral RNA. This is Coat protein from Chenopodium album (Fat hen).